Consider the following 349-residue polypeptide: 4-hydroxy-2-oxovalerate aldolase 2 (349 aa).

A Pyruvate carboxyltransferase domain is found at 12–264 (VRMTDTSLRD…KTGIDFFDIA (253 aa)). 20–21 (RD) is a substrate binding site. Residue D21 coordinates Mn(2+). Residue H24 is the Proton acceptor of the active site. Positions 174 and 203 each coordinate substrate. Residues H203 and H205 each coordinate Mn(2+). Substrate is bound at residue Y294.

Belongs to the 4-hydroxy-2-oxovalerate aldolase family.

The enzyme catalyses (S)-4-hydroxy-2-oxopentanoate = acetaldehyde + pyruvate. In Mycolicibacterium smegmatis (strain ATCC 700084 / mc(2)155) (Mycobacterium smegmatis), this protein is 4-hydroxy-2-oxovalerate aldolase 2 (bphI-2).